A 320-amino-acid chain; its full sequence is MDDSSFMDLMIDTDEYLIDDWESDFPICGETNTNPGSESGSGTGFELLAERPTKQMKTNNNMNSTSSSPSSSSSSGSRTSQVISFGSPDTKTNPVETSLNFSNQVSMDQKVGSKRKDCVNNGGRREPHLLKEHVLAERKRRQKLNERLIALSALLPGLKKTDKATVLEDAIKHLKQLQERVKKLEEERVVTKKMDQSIILVKRSQVYLDDDSSSYSSTCSAASPLSSSSDEVSIFKQTMPMIEARVSDRDLLIRVHCEKNKGCMIKILSSLEKFRLEVVNSFTLPFGNSTLVITILTKMDNKFSRPVEEVVKNIRVALAE.

The segment at 53 to 105 (TKQMKTNNNMNSTSSSPSSSSSSGSRTSQVISFGSPDTKTNPVETSLNFSNQV) is disordered. The segment covering 58 to 80 (TNNNMNSTSSSPSSSSSSGSRTS) has biased composition (low complexity). Residues 81–105 (QVISFGSPDTKTNPVETSLNFSNQV) are compositionally biased toward polar residues. The bHLH domain occupies 128–177 (HLLKEHVLAERKRRQKLNERLIALSALLPGLKKTDKATVLEDAIKHLKQL).

As to quaternary structure, homodimer. In terms of tissue distribution, expressed constitutively in roots, leaves, stems, and flowers.

It localises to the nucleus. Functionally, transcription activator that regulates the expression of at least NAI2, PYK10 and PBP1. Required for and mediates the formation of endoplasmic reticulum bodies (ER bodies). Involved in the symbiotic interactions with the endophytes of the Sebacinaceae fungus family, such as Piriformospora indica and Sebacina. The protein is Transcription factor NAI1 (NAI1) of Arabidopsis thaliana (Mouse-ear cress).